The following is a 90-amino-acid chain: Secretoglobin family 1D member 2 (90 aa).

A signal peptide spans 1–21 (MKLSVCLLLVTLALCCYQANA).

It belongs to the secretoglobin family. Lipophilin subfamily. In terms of tissue distribution, highest expression was found in skeletal muscle. Expressed as well in thymus, trachea, kidney, steroid responsive tissues (prostate, testis, uterus, breast and ovary) and salivary gland.

The protein resides in the secreted. May bind androgens and other steroids, may also bind estramustine, a chemotherapeutic agent used for prostate cancer. May be under transcriptional regulation of steroid hormones. In Homo sapiens (Human), this protein is Secretoglobin family 1D member 2 (SCGB1D2).